The following is a 232-amino-acid chain: 7-cyano-7-deazaguanine synthase (232 aa).

Residue Cys7–Ala17 participates in ATP binding. Positions 185, 193, 196, and 199 each coordinate Zn(2+).

The protein belongs to the QueC family. Requires Zn(2+) as cofactor.

The catalysed reaction is 7-carboxy-7-deazaguanine + NH4(+) + ATP = 7-cyano-7-deazaguanine + ADP + phosphate + H2O + H(+). It participates in purine metabolism; 7-cyano-7-deazaguanine biosynthesis. In terms of biological role, catalyzes the ATP-dependent conversion of 7-carboxy-7-deazaguanine (CDG) to 7-cyano-7-deazaguanine (preQ(0)). The chain is 7-cyano-7-deazaguanine synthase from Chelativorans sp. (strain BNC1).